Reading from the N-terminus, the 350-residue chain is Nicotinate-nucleotide--dimethylbenzimidazole phosphoribosyltransferase (350 aa).

The Proton acceptor role is filled by glutamate 317.

This sequence belongs to the CobT family.

It carries out the reaction 5,6-dimethylbenzimidazole + nicotinate beta-D-ribonucleotide = alpha-ribazole 5'-phosphate + nicotinate + H(+). It functions in the pathway nucleoside biosynthesis; alpha-ribazole biosynthesis; alpha-ribazole from 5,6-dimethylbenzimidazole: step 1/2. In terms of biological role, catalyzes the synthesis of alpha-ribazole-5'-phosphate from nicotinate mononucleotide (NAMN) and 5,6-dimethylbenzimidazole (DMB). This is Nicotinate-nucleotide--dimethylbenzimidazole phosphoribosyltransferase from Shewanella sp. (strain MR-4).